The primary structure comprises 329 residues: uncharacterized protein (329 aa).

Residues 1-32 (MSQDRGPRRPRRLEKCALISASATVLSLTASG) form the signal peptide. Residue cysteine 33 is the site of N-palmitoyl cysteine attachment. A lipid anchor (S-diacylglycerol cysteine) is attached at cysteine 33.

The protein resides in the cell membrane. This is an uncharacterized protein from Streptomyces coelicolor (strain ATCC BAA-471 / A3(2) / M145).